Here is a 352-residue protein sequence, read N- to C-terminus: MNETTPLLLRAARGEHVERPPVWMMRQAGRYMKVYRDLRDNHPSFRERSENPDLSYEISMQPFTAFQPDGVILFSDILTPLPGMGINFDIVESKGPLINDPIRSLKQVKDLKPLQPEESMSFVGEVLGRLRESVGNKAAVLGFVGAPWTLAAYVVEGKSSKNYAVIKAMAFQEPELLHQLLNHFAESIANYLSYQIQSGAQVVQMFDSWAGQLSPQDYDEFAAPYQQKVVNLVKEKHPDTPMILYISGSAGVLERMGQTGVDIVSLDWTVDMADGLKRLPQSVGVQGNVDPGLLFGTPDAIRSRIVDVVKKAKGRKHILNLGHGILPGTPEENARVFFEAGKNVNELIKVSS.

Substrate contacts are provided by residues arginine 26–arginine 30, aspartate 76, tyrosine 153, serine 208, and histidine 323.

The protein belongs to the uroporphyrinogen decarboxylase family. As to quaternary structure, homodimer.

It is found in the cytoplasm. It carries out the reaction uroporphyrinogen III + 4 H(+) = coproporphyrinogen III + 4 CO2. It functions in the pathway porphyrin-containing compound metabolism; protoporphyrin-IX biosynthesis; coproporphyrinogen-III from 5-aminolevulinate: step 4/4. Functionally, catalyzes the decarboxylation of four acetate groups of uroporphyrinogen-III to yield coproporphyrinogen-III. This chain is Uroporphyrinogen decarboxylase, found in Prochlorococcus marinus (strain NATL1A).